Here is a 397-residue protein sequence, read N- to C-terminus: Histidinol-phosphate aminotransferase (397 aa).

Position 247 is an N6-(pyridoxal phosphate)lysine (Lys247).

Belongs to the class-II pyridoxal-phosphate-dependent aminotransferase family. Histidinol-phosphate aminotransferase subfamily. As to quaternary structure, homodimer. Pyridoxal 5'-phosphate is required as a cofactor.

The enzyme catalyses L-histidinol phosphate + 2-oxoglutarate = 3-(imidazol-4-yl)-2-oxopropyl phosphate + L-glutamate. It participates in amino-acid biosynthesis; L-histidine biosynthesis; L-histidine from 5-phospho-alpha-D-ribose 1-diphosphate: step 7/9. The protein is Histidinol-phosphate aminotransferase of Frankia casuarinae (strain DSM 45818 / CECT 9043 / HFP020203 / CcI3).